Here is a 180-residue protein sequence, read N- to C-terminus: Large ribosomal subunit protein uL6c (180 aa).

It belongs to the universal ribosomal protein uL6 family. As to quaternary structure, part of the 50S ribosomal subunit.

The protein resides in the plastid. It is found in the chloroplast. Its function is as follows. Binds 23S rRNA. The polypeptide is Large ribosomal subunit protein uL6c (rpl6) (Porphyra purpurea (Red seaweed)).